The sequence spans 85 residues: MINVSLKRSLLIFISVITSNIGSEARELTGAGKKLEVATRSSNYAGTARTLLQARPCQRDVDCNFQCPRIQGGQCNNHHGTCDCF.

Positions 1–25 (MINVSLKRSLLIFISVITSNIGSEA) are cleaved as a signal peptide. 3 disulfides stabilise this stretch: Cys-57-Cys-75, Cys-63-Cys-82, and Cys-67-Cys-84.

This sequence belongs to the DEFL family.

The protein resides in the secreted. This is Putative defensin-like protein 258 from Arabidopsis thaliana (Mouse-ear cress).